The chain runs to 289 residues: Rhodopsin (289 aa).

Residues 1–7 (YLVSPAG) are Extracellular-facing. Residues 8–32 (YAALGAYMFLLILVGFPVNFLTLYV) form a helical membrane-spanning segment. Residues 33-44 (TLEHKKLRTPLN) lie on the Cytoplasmic side of the membrane. Residues 45–67 (YILLNLAVADLFMVLGGFTTTMY) form a helical membrane-spanning segment. At 68-81 (TSMHGYFVLGRLGC) the chain is on the extracellular side. A disulfide bridge links Cys-81 with Cys-158. The helical transmembrane segment at 82–104 (NLEGFFVTLGGEIALWSLVVLAI) threads the bilayer. The 'Ionic lock' involved in activated form stabilization motif lies at 105–107 (ERW). Over 105–123 (ERWIGVFKSIRNFRFTEDH) the chain is Cytoplasmic. A helical membrane pass occupies residues 124 to 144 (AIMGLGFSWVMAATCAVPPLV). At 145–173 (GWLRYIPEGMQCSCGVDYYTRAEGFNNES) the chain is on the extracellular side. Residue Asn-171 is glycosylated (N-linked (GlcNAc...) asparagine). A helical membrane pass occupies residues 174–195 (FVIYMFIVHFLIPLIVIFFCYG). Over 196–223 (RLLCAVKEAAAAQQESETTQRAEKEVSR) the chain is Cytoplasmic. A helical transmembrane segment spans residues 224 to 245 (MVVIMVIGYLVCWLPYASVAWW). Residues 246 to 257 (IFCNQGSEFGPI) lie on the Extracellular side of the membrane. A helical transmembrane segment spans residues 258 to 279 (FMTLPAFFAKSPAIYNPLIYIC). Lys-267 carries the N6-(retinylidene)lysine modification. Residues 280-289 (MNKQFPHCMI) lie on the Cytoplasmic side of the membrane.

This sequence belongs to the G-protein coupled receptor 1 family. Opsin subfamily. Post-translationally, phosphorylated on some or all of the serine and threonine residues present in the C-terminal region. In terms of processing, contains one covalently linked retinal chromophore.

It localises to the membrane. The protein resides in the cell projection. Its subcellular location is the cilium. The protein localises to the photoreceptor outer segment. Functionally, photoreceptor required for image-forming vision at low light intensity. While most salt water fish species use retinal as chromophore, most freshwater fish use 3-dehydroretinal, or a mixture of retinal and 3-dehydroretinal. Light-induced isomerization of 11-cis to all-trans retinal triggers a conformational change that activates signaling via G-proteins. Subsequent receptor phosphorylation mediates displacement of the bound G-protein alpha subunit by arrestin and terminates signaling. This Leocottus kesslerii (Kessler's sculpin) protein is Rhodopsin (rho).